The sequence spans 65 residues: Large ribosomal subunit protein bL35 (65 aa).

The protein belongs to the bacterial ribosomal protein bL35 family.

This chain is Large ribosomal subunit protein bL35, found in Aeromonas hydrophila subsp. hydrophila (strain ATCC 7966 / DSM 30187 / BCRC 13018 / CCUG 14551 / JCM 1027 / KCTC 2358 / NCIMB 9240 / NCTC 8049).